Here is a 399-residue protein sequence, read N- to C-terminus: Glutamyl-tRNA reductase (399 aa).

Residues 45–48 (TCNR), serine 93, 98–100 (EDQ), and glutamine 104 each bind substrate. Cysteine 46 acts as the Nucleophile in catalysis. Residue 173-178 (GAGKMG) participates in NADP(+) binding.

It belongs to the glutamyl-tRNA reductase family. As to quaternary structure, homodimer.

The enzyme catalyses (S)-4-amino-5-oxopentanoate + tRNA(Glu) + NADP(+) = L-glutamyl-tRNA(Glu) + NADPH + H(+). It functions in the pathway porphyrin-containing compound metabolism; protoporphyrin-IX biosynthesis; 5-aminolevulinate from L-glutamyl-tRNA(Glu): step 1/2. Its function is as follows. Catalyzes the NADPH-dependent reduction of glutamyl-tRNA(Glu) to glutamate 1-semialdehyde (GSA). The chain is Glutamyl-tRNA reductase from Methanobrevibacter smithii (strain ATCC 35061 / DSM 861 / OCM 144 / PS).